A 192-amino-acid chain; its full sequence is Elongation factor P (192 aa).

It belongs to the elongation factor P family.

It localises to the cytoplasm. Its pathway is protein biosynthesis; polypeptide chain elongation. Its function is as follows. Involved in peptide bond synthesis. Stimulates efficient translation and peptide-bond synthesis on native or reconstituted 70S ribosomes in vitro. Probably functions indirectly by altering the affinity of the ribosome for aminoacyl-tRNA, thus increasing their reactivity as acceptors for peptidyl transferase. In Borrelia garinii subsp. bavariensis (strain ATCC BAA-2496 / DSM 23469 / PBi) (Borreliella bavariensis), this protein is Elongation factor P.